Reading from the N-terminus, the 122-residue chain is MSITNEQILDAVAEMSVMQVVELIEAMEEKFGVTAAAAVVAGGAAGGDAAEEQSEFDVILTSAGANKVAVIKAVRGATGLGLKEAKGLVDSAPAPLKEGVDKAEAEALKAQLEEAGASVEVK.

The protein belongs to the bacterial ribosomal protein bL12 family. Homodimer. Part of the ribosomal stalk of the 50S ribosomal subunit. Forms a multimeric L10(L12)X complex, where L10 forms an elongated spine to which 2 to 4 L12 dimers bind in a sequential fashion. Binds GTP-bound translation factors.

Its function is as follows. Forms part of the ribosomal stalk which helps the ribosome interact with GTP-bound translation factors. Is thus essential for accurate translation. This Aliivibrio fischeri (strain ATCC 700601 / ES114) (Vibrio fischeri) protein is Large ribosomal subunit protein bL12.